Here is a 126-residue protein sequence, read N- to C-terminus: Large ribosomal subunit protein bL12 (126 aa).

This sequence belongs to the bacterial ribosomal protein bL12 family. Homodimer. Part of the ribosomal stalk of the 50S ribosomal subunit. Forms a multimeric L10(L12)X complex, where L10 forms an elongated spine to which 2 to 4 L12 dimers bind in a sequential fashion. Binds GTP-bound translation factors.

In terms of biological role, forms part of the ribosomal stalk which helps the ribosome interact with GTP-bound translation factors. Is thus essential for accurate translation. The protein is Large ribosomal subunit protein bL12 of Desulforudis audaxviator (strain MP104C).